We begin with the raw amino-acid sequence, 638 residues long: Growth hormone receptor (638 aa).

The signal sequence occupies residues 1–18 (MDLWRVFLTLALAVSSDM). Over 19–265 (FPGSGATPAT…TLAACEEDFR (247 aa)) the chain is Extracellular. Cystine bridges form between Cys56-Cys66 and Cys101-Cys112. N-linked (GlcNAc...) asparagine glycosylation is present at Asn115. Cysteines 126 and 140 form a disulfide. One can recognise a Fibronectin type-III domain in the interval 151 to 254 (PPIGLNWTLL…EVLRVTFPQM (104 aa)). N-linked (GlcNAc...) asparagine glycosylation is found at Asn156, Asn161, and Asn200. A WSXWS motif motif is present at residues 240 to 244 (YSEFS). Residues 266–289 (FPWFLIIIFGIFGVAVMLFVVIFS) traverse the membrane as a helical segment. Residues 290–638 (KQQRIKMLIL…STDQLNKIMQ (349 aa)) lie on the Cytoplasmic side of the membrane. Residues 295–380 (KMLILPPVPV…QEKSAGILGA (86 aa)) form a required for JAK2 binding region. A Box 1 motif motif is present at residues 298–306 (ILPPVPVPK). The short motif at 341-350 (DSWVEFIELD) is the UbE motif element. A Phosphoserine modification is found at Ser342. The tract at residues 357–389 (KTEESDTDRLLSDDQEKSAGILGAKDDDSGRTS) is disordered. The segment covering 363 to 373 (TDRLLSDDQEK) has biased composition (basic and acidic residues). Tyr487 and Tyr594 each carry phosphotyrosine.

It belongs to the type I cytokine receptor family. Type 1 subfamily. As to quaternary structure, on growth hormone (GH) binding, forms homodimers and binds JAK2 via a box 1-containing domain. Post-translationally, the soluble form (GHBP) is produced by phorbol ester-promoted proteolytic cleavage at the cell surface (shedding) by ADAM17/TACE. Shedding is inhibited by growth hormone (GH) binding to the receptor probably due to a conformational change in GHR rendering the receptor inaccessible to ADAM17. In terms of processing, on GH binding, phosphorylated on tyrosine residues in the cytoplasmic domain by JAK2. Phosphorylation on either (or all of) Tyr-534, Tyr-566 and/or Tyr-627 is required for STAT5 activation. Phosphorylation on Tyr-333 would seem necessary for JAK2 activation. Ubiquitinated by the ECS(SOCS2) complex following ligand-binding and phosphorylation by JAK2, leading to its degradation by the proteasome. Regulation by the ECS(SOCS2) complex acts as a negative feedback loop of growth hormone receptor signaling. Ubiquitination is not sufficient for GHR internalization. As to expression, highest expression in liver. Also expressed in heart, kidney and muscle.

Its subcellular location is the cell membrane. It localises to the secreted. Receptor for pituitary gland growth hormone involved in regulating postnatal body growth. On ligand binding, couples to, and activates the JAK2/STAT5 pathway. Its function is as follows. Receptor for pituitary gland growth hormone (GH1) involved in regulating postnatal body growth. On ligand binding, couples to the JAK2/STAT5 pathway. Functionally, the soluble form (GHBP) acts as a reservoir of growth hormone in plasma and may be a modulator/inhibitor of GH signaling. This is Growth hormone receptor (Ghr) from Rattus norvegicus (Rat).